Here is a 213-residue protein sequence, read N- to C-terminus: Imidazole glycerol phosphate synthase subunit HisH (213 aa).

The region spanning 4-211 (NLGLIDYGMG…LTWLRNGAEP (208 aa)) is the Glutamine amidotransferase type-1 domain. Cysteine 82 serves as the catalytic Nucleophile. Residues histidine 186 and glutamate 188 contribute to the active site.

Heterodimer of HisH and HisF.

It localises to the cytoplasm. The enzyme catalyses 5-[(5-phospho-1-deoxy-D-ribulos-1-ylimino)methylamino]-1-(5-phospho-beta-D-ribosyl)imidazole-4-carboxamide + L-glutamine = D-erythro-1-(imidazol-4-yl)glycerol 3-phosphate + 5-amino-1-(5-phospho-beta-D-ribosyl)imidazole-4-carboxamide + L-glutamate + H(+). It carries out the reaction L-glutamine + H2O = L-glutamate + NH4(+). It functions in the pathway amino-acid biosynthesis; L-histidine biosynthesis; L-histidine from 5-phospho-alpha-D-ribose 1-diphosphate: step 5/9. IGPS catalyzes the conversion of PRFAR and glutamine to IGP, AICAR and glutamate. The HisH subunit catalyzes the hydrolysis of glutamine to glutamate and ammonia as part of the synthesis of IGP and AICAR. The resulting ammonia molecule is channeled to the active site of HisF. In Synechococcus sp. (strain CC9605), this protein is Imidazole glycerol phosphate synthase subunit HisH.